Reading from the N-terminus, the 486-residue chain is Cysteine--tRNA ligase (486 aa).

Cys27 provides a ligand contact to Zn(2+). A 'HIGH' region motif is present at residues Pro29–Asn39. Residues Cys207, His232, and Glu236 each coordinate Zn(2+). The 'KMSKS' region motif lies at Lys264–Ser268. Lys267 is an ATP binding site.

This sequence belongs to the class-I aminoacyl-tRNA synthetase family. Monomer. Zn(2+) is required as a cofactor.

It is found in the cytoplasm. The catalysed reaction is tRNA(Cys) + L-cysteine + ATP = L-cysteinyl-tRNA(Cys) + AMP + diphosphate. The chain is Cysteine--tRNA ligase from Desulforamulus reducens (strain ATCC BAA-1160 / DSM 100696 / MI-1) (Desulfotomaculum reducens).